The primary structure comprises 313 residues: Transcription factor MafB (313 aa).

Disordered stretches follow at residues 51-77 (QPTGSVSSTPISTPCSSVPSSPSFSPT) and 151-197 (MGLP…VEDR). The segment covering 55-76 (SVSSTPISTPCSSVPSSPSFSP) has biased composition (low complexity). The span at 154 to 166 (PHHHPHHHQHQHH) shows a compositional bias: basic residues. Positions 167 to 192 (QTSPSPSGSSSSSQQLHHQQQHSSSS) are enriched in low complexity. Residues 225–250 (RLKQKRRTLKNRGYAQSCRYKRVQQK) are basic motif. The 64-residue stretch at 225–288 (RLKQKRRTLK…DAYKIKCEKL (64 aa)) folds into the bZIP domain. The interval 253–274 (LEGEKTQLVQQVEQLKQEVSRL) is leucine-zipper. The tract at residues 292–313 (NSSNFREAGSTSDNPSSPEFFM) is disordered.

This sequence belongs to the bZIP family. Maf subfamily. As to quaternary structure, homodimer or heterodimer with other bHLH-Zip transcription factors. Binds DNA as a homodimer or a heterodimer.

The protein localises to the nucleus. Its function is as follows. Acts as a transcriptional activator or repressor. Implicated in the regulation of cell-type specific gene expression and play a role in inductive events during lens development. This is Transcription factor MafB (mafb) from Xenopus laevis (African clawed frog).